The sequence spans 534 residues: Ankyrin repeat and LEM domain-containing protein 1 (534 aa).

ANK repeat units follow at residues 4 to 35 (TACLALRLLAALREEEARAVEELLRLGADPNL), 39 to 71 (DGAAAVHLAARASHPRALHCLRMLLRWGADPNA), 75 to 104 (EGLTPVHVAAAWGCCGALELLLSRGGDPTL), and 108 to 137 (DGLRPLDWALQQRHHNCARVLQELDTPTQP). The region spanning 279–323 (HSSVPPMSDLQLLQALRALGYSPGPVTPFTRGHYLRRLQEAQASR) is the LEM domain. The GIY-YIG domain occupies 370-485 (KSSFTYLLLD…ALGLQTLTNQ (116 aa)). Residues 498–505 (PPSRRRRL) carry the Nuclear localization signal motif.

As to quaternary structure, interacts (via LEM domain) with BANF1; the interaction may favor BANF1 dimerization. As to expression, predominantly expressed in bone marrow, spleen, thymus, colon and ovary. Expressed also to a lesser extent in lymph nodes, liver and testis.

The protein resides in the cytoplasm. Its subcellular location is the nucleus. Its function is as follows. Endonuclease that probably plays a role in the DNA damage response and DNA repair. This is Ankyrin repeat and LEM domain-containing protein 1 from Mus musculus (Mouse).